The following is a 234-amino-acid chain: Probable transcriptional regulatory protein PSPTO_3162 (234 aa).

The protein belongs to the TACO1 family.

The protein localises to the cytoplasm. In Pseudomonas syringae pv. tomato (strain ATCC BAA-871 / DC3000), this protein is Probable transcriptional regulatory protein PSPTO_3162.